Here is an 82-residue protein sequence, read N- to C-terminus: Sec-independent protein translocase protein TatA (82 aa).

A helical membrane pass occupies residues 1 to 21 (MGSFSIWHWLIVLLVVVMIFG). Residues 39 to 82 (FKDGMKDGSTTDAPAASSAPAAQVTGQPANSDKSTIDVEARQKS) are disordered. The span at 51–60 (APAASSAPAA) shows a compositional bias: low complexity. Positions 62–71 (VTGQPANSDK) are enriched in polar residues. Basic and acidic residues predominate over residues 72 to 82 (STIDVEARQKS).

The protein belongs to the TatA/E family. As to quaternary structure, the Tat system comprises two distinct complexes: a TatABC complex, containing multiple copies of TatA, TatB and TatC subunits, and a separate TatA complex, containing only TatA subunits. Substrates initially bind to the TatABC complex, which probably triggers association of the separate TatA complex to form the active translocon.

Its subcellular location is the cell inner membrane. Its function is as follows. Part of the twin-arginine translocation (Tat) system that transports large folded proteins containing a characteristic twin-arginine motif in their signal peptide across membranes. TatA could form the protein-conducting channel of the Tat system. The polypeptide is Sec-independent protein translocase protein TatA (Variovorax paradoxus (strain S110)).